Here is a 275-residue protein sequence, read N- to C-terminus: Large ribosomal subunit protein uL2 (275 aa).

2 disordered regions span residues 34-59 (LEKKSKSGGRNNNGRITTRHIGGGHK) and 223-275 (VAMN…RNKK).

The protein belongs to the universal ribosomal protein uL2 family. Part of the 50S ribosomal subunit. Forms a bridge to the 30S subunit in the 70S ribosome.

In terms of biological role, one of the primary rRNA binding proteins. Required for association of the 30S and 50S subunits to form the 70S ribosome, for tRNA binding and peptide bond formation. It has been suggested to have peptidyltransferase activity; this is somewhat controversial. Makes several contacts with the 16S rRNA in the 70S ribosome. The protein is Large ribosomal subunit protein uL2 of Teredinibacter turnerae (strain ATCC 39867 / T7901).